An 89-amino-acid chain; its full sequence is Small ribosomal subunit protein uS15 (89 aa).

Positions 1 to 25 are disordered; the sequence is MSLDTTEKQQLINTHQTHGTDTGSA. The segment covering 8–25 has biased composition (polar residues); the sequence is KQQLINTHQTHGTDTGSA.

It belongs to the universal ribosomal protein uS15 family. As to quaternary structure, part of the 30S ribosomal subunit. Forms a bridge to the 50S subunit in the 70S ribosome, contacting the 23S rRNA.

Functionally, one of the primary rRNA binding proteins, it binds directly to 16S rRNA where it helps nucleate assembly of the platform of the 30S subunit by binding and bridging several RNA helices of the 16S rRNA. Forms an intersubunit bridge (bridge B4) with the 23S rRNA of the 50S subunit in the ribosome. This chain is Small ribosomal subunit protein uS15, found in Parasynechococcus marenigrum (strain WH8102).